The following is a 708-amino-acid chain: Leucine-rich repeat neuronal protein 3 (708 aa).

Positions 1–22 are cleaved as a signal peptide; that stretch reads MKDMPLQIHVLLGLAITTLVQA. The LRRNT domain occupies 23–69; that stretch reads VDKKVDCPQLCTCEIRPWFTPTSIYMEASTVDCNDLGLLTFPARLPA. Residues 23–628 are Extracellular-facing; sequence VDKKVDCPQL…KEYEKSNTTT (606 aa). LRR repeat units lie at residues 70 to 91, 93 to 114, 117 to 138, 141 to 162, 165 to 186, 189 to 210, 213 to 234, 237 to 258, 261 to 282, 285 to 304, 310 to 332, and 335 to 358; these read NTQILLLQTNDIAKIEYSTDFP, NLTGLDLSQNNLSSVTNINVKK, QLLSVYLEENKLTELPEKCLSE, NLQELYINHNLLSTISPGAFIG, NLLRLHLNSNRLQMINSKWFDA, NLEILMIGENPIIRIKDMNFKP, NLRSLVIAGINLTEIPDNALVG, NLESISFYDNRLIKVPHAALQK, NLKFLDLNKNPINRIRRGDFSN, HLKELGINNMPELISIDSLA, DLRKIEATNNPRLSYIHPNAFFR, and KLESLMLNSNALSALYHGTIESLP. Asn93 and Asn103 each carry an N-linked (GlcNAc...) asparagine glycan. The N-linked (GlcNAc...) asparagine glycan is linked to Asn223. The LRRCT domain occupies 368–421; the sequence is NPIRCDCVIRWINMNKTNIRFMEPDSLFCVDPPEFQGQNVRQVHFRDMMEICLP. A glycan (N-linked (GlcNAc...) asparagine) is linked at Asn382. The region spanning 421-514 is the Ig-like C2-type domain; the sequence is PLIAPESFPS…DLKSVMIKVD (94 aa). Cys444 and Cys496 are oxidised to a cystine. N-linked (GlcNAc...) asparagine glycans are attached at residues Asn522, Asn579, Asn608, and Asn625. In terms of domain architecture, Fibronectin type-III spans 523–617; it reads GSLNIKIRDI…NVTTKGLDPD (95 aa). The helical transmembrane segment at 629-649 threads the bilayer; sequence LMACLGGLLGIIGVICLISCL. Residues 650 to 708 lie on the Cytoplasmic side of the membrane; it reads SPEMNCDGGHSYVRNYLQKPTFALGELYPPLINLWEAGKEKSTSLKVKATVIGLPTNMS.

It localises to the membrane. The sequence is that of Leucine-rich repeat neuronal protein 3 (LRRN3) from Pongo abelii (Sumatran orangutan).